Here is a 72-residue protein sequence, read N- to C-terminus: Translation initiation factor IF-1 (72 aa).

In terms of domain architecture, S1-like spans 1–72 (MAKTDLLEVQ…ERGRIVFRHK (72 aa)).

This sequence belongs to the IF-1 family. In terms of assembly, component of the 30S ribosomal translation pre-initiation complex which assembles on the 30S ribosome in the order IF-2 and IF-3, IF-1 and N-formylmethionyl-tRNA(fMet); mRNA recruitment can occur at any time during PIC assembly.

It is found in the cytoplasm. In terms of biological role, one of the essential components for the initiation of protein synthesis. Stabilizes the binding of IF-2 and IF-3 on the 30S subunit to which N-formylmethionyl-tRNA(fMet) subsequently binds. Helps modulate mRNA selection, yielding the 30S pre-initiation complex (PIC). Upon addition of the 50S ribosomal subunit IF-1, IF-2 and IF-3 are released leaving the mature 70S translation initiation complex. This is Translation initiation factor IF-1 from Spiroplasma kunkelii.